Consider the following 310-residue polypeptide: Vomeronasal type-1 receptor 101 (310 aa).

The Extracellular portion of the chain corresponds to 1 to 19 (MNKVNILPSDTNMKITLFS). A helical transmembrane segment spans residues 20–40 (ELSVGISANSILFFAHLCMFF). The Cytoplasmic segment spans residues 41–49 (EENRSKPID). A helical transmembrane segment spans residues 50-70 (LCIAFLSLTQLMLLVTMGLIA). Over 71-93 (ADMFMAQGIWDITTCRSLIYFHR) the chain is Extracellular. Cys85 and Cys172 form a disulfide bridge. A helical transmembrane segment spans residues 94–114 (LLRGFNLCAACLLHILWTFTL). Topologically, residues 115–134 (SPRSSCLTKFKHKSPHHISG) are cytoplasmic. Residues 135–155 (AYLFFCVLYMSFSSHLFVLVI) traverse the membrane as a helical segment. Topologically, residues 156-193 (ATSNLTSDHFMYVTQSCSLLPMSYSRTSTFSLLMVTRE) are extracellular. An N-linked (GlcNAc...) asparagine glycan is attached at Asn159. The helical transmembrane segment at 194–214 (VFLISLMALSSGYMVTLLWRH) threads the bilayer. The Cytoplasmic segment spans residues 215–238 (KKQAQHLHSTRLSSKASPQQRATR). The helical transmembrane segment at 239–259 (TILLLMTFFVVFYILGTVIFH) threads the bilayer. Topologically, residues 260 to 268 (SRTKFKDGS) are extracellular. The chain crosses the membrane as a helical span at residues 269–289 (IFYCVQIIVSHSYATISPFVF). At 290–310 (VFSEKRIIKFFRSMCGRIVNT) the chain is on the cytoplasmic side.

Belongs to the G-protein coupled receptor 1 family. As to expression, expressed in 1-4% of neurons of the vomeronasal organ. Only one pheromone receptor gene may be expressed in a particular neuron. Not expressed in the main olfactory epithelium.

The protein localises to the cell membrane. Its function is as follows. Putative pheromone receptor implicated in the regulation of social as well as reproductive behavior. The sequence is that of Vomeronasal type-1 receptor 101 (Vom1r101) from Rattus norvegicus (Rat).